The following is a 421-amino-acid chain: UDP-N-acetylglucosamine 1-carboxyvinyltransferase (421 aa).

A phosphoenolpyruvate-binding site is contributed by 22-23 (KN). Arg92 contacts UDP-N-acetyl-alpha-D-glucosamine. The Proton donor role is filled by Asp116. UDP-N-acetyl-alpha-D-glucosamine-binding positions include 121–125 (RPIDQ), Asp307, and Ile330.

The protein belongs to the EPSP synthase family. MurA subfamily.

It is found in the cytoplasm. It carries out the reaction phosphoenolpyruvate + UDP-N-acetyl-alpha-D-glucosamine = UDP-N-acetyl-3-O-(1-carboxyvinyl)-alpha-D-glucosamine + phosphate. It functions in the pathway cell wall biogenesis; peptidoglycan biosynthesis. In terms of biological role, cell wall formation. Adds enolpyruvyl to UDP-N-acetylglucosamine. The sequence is that of UDP-N-acetylglucosamine 1-carboxyvinyltransferase from Lactobacillus johnsonii (strain CNCM I-12250 / La1 / NCC 533).